Consider the following 123-residue polypeptide: Small ribosomal subunit protein uS12 (123 aa).

A compositionally biased stretch (basic residues) spans 10–20; that stretch reads KGRKKVKKKKT. Positions 10–32 are disordered; sequence KGRKKVKKKKTAPALQGSPQKRG. 3-methylthioaspartic acid is present on Asp89.

It belongs to the universal ribosomal protein uS12 family. As to quaternary structure, part of the 30S ribosomal subunit. Contacts proteins S8 and S17. May interact with IF1 in the 30S initiation complex.

Functionally, with S4 and S5 plays an important role in translational accuracy. Its function is as follows. Interacts with and stabilizes bases of the 16S rRNA that are involved in tRNA selection in the A site and with the mRNA backbone. Located at the interface of the 30S and 50S subunits, it traverses the body of the 30S subunit contacting proteins on the other side and probably holding the rRNA structure together. The combined cluster of proteins S8, S12 and S17 appears to hold together the shoulder and platform of the 30S subunit. In Halothermothrix orenii (strain H 168 / OCM 544 / DSM 9562), this protein is Small ribosomal subunit protein uS12.